Reading from the N-terminus, the 53-residue chain is KKGVTLREDDRTFPCSSGLCACLPLDSYSYICLSPSSSTANCENDECISEDDW.

A propeptide spanning residues 1-6 (KKGVTL) is cleaved from the precursor. Disulfide bonds link Cys15–Cys32, Cys20–Cys42, and Cys22–Cys47.

In terms of tissue distribution, expressed by the venom duct.

The protein localises to the secreted. In terms of biological role, probable neurotoxin with unknown target. Possibly targets ion channels. The sequence is that of Conotoxin Cal9.2f from Californiconus californicus (California cone).